Consider the following 682-residue polypeptide: Methionine--tRNA ligase (682 aa).

A 'HIGH' region motif is present at residues 14–24; that stretch reads PYANGSIHLGH. Zn(2+)-binding residues include Cys-145, Cys-148, Cys-158, and Cys-161. Residues 331–335 carry the 'KMSKS' region motif; it reads KMSKS. Lys-334 contacts ATP. The tRNA-binding domain occupies 580–682; that stretch reads AFAAVDLRVA…SGAKPGQRIK (103 aa).

This sequence belongs to the class-I aminoacyl-tRNA synthetase family. MetG type 1 subfamily. Homodimer. It depends on Zn(2+) as a cofactor.

The protein resides in the cytoplasm. It carries out the reaction tRNA(Met) + L-methionine + ATP = L-methionyl-tRNA(Met) + AMP + diphosphate. Its function is as follows. Is required not only for elongation of protein synthesis but also for the initiation of all mRNA translation through initiator tRNA(fMet) aminoacylation. In Pseudomonas savastanoi pv. phaseolicola (strain 1448A / Race 6) (Pseudomonas syringae pv. phaseolicola (strain 1448A / Race 6)), this protein is Methionine--tRNA ligase.